Here is a 374-residue protein sequence, read N- to C-terminus: Polar flagellin E (374 aa).

Residues 102-126 adopt a coiled-coil conformation; the sequence is SHEQDDRKSLQQEVIALQDELDRVA.

This sequence belongs to the bacterial flagellin family. Heteromer of multiple flagellin subunits including FlaA, FlaB/D, FlaC, FlaE and FlaF.

The protein localises to the secreted. Its subcellular location is the bacterial flagellum. Functionally, flagellin is the subunit protein which polymerizes to form the filaments of bacterial flagella. The sequence is that of Polar flagellin E (flaE) from Vibrio parahaemolyticus serotype O3:K6 (strain RIMD 2210633).